The sequence spans 1050 residues: Beta-galactosidase (1050 aa).

Asn-100 and Asp-199 together coordinate substrate. Position 199 (Asp-199) interacts with Na(+). Positions 422, 424, and 467 each coordinate Mg(2+). Substrate is bound by residues Glu-467 and 543-546; that span reads EYAH. The Proton donor role is filled by Glu-467. Catalysis depends on Glu-543, which acts as the Nucleophile. A Mg(2+)-binding site is contributed by Asn-603. Na(+) is bound by residues Phe-607 and Asn-610. The substrate site is built by Asn-610 and Trp-1025.

The protein belongs to the glycosyl hydrolase 2 family. Homotetramer. The cofactor is Mg(2+). Na(+) serves as cofactor.

The catalysed reaction is Hydrolysis of terminal non-reducing beta-D-galactose residues in beta-D-galactosides.. The sequence is that of Beta-galactosidase from Yersinia pestis bv. Antiqua (strain Angola).